We begin with the raw amino-acid sequence, 488 residues long: Protein nucleotidyltransferase YdiU (488 aa).

G90, G92, R93, K113, D125, G126, R176, and R183 together coordinate ATP. D252 (proton acceptor) is an active-site residue. Mg(2+) contacts are provided by N253 and D262. D262 contacts ATP.

This sequence belongs to the SELO family. The cofactor is Mg(2+). It depends on Mn(2+) as a cofactor.

It catalyses the reaction L-seryl-[protein] + ATP = 3-O-(5'-adenylyl)-L-seryl-[protein] + diphosphate. It carries out the reaction L-threonyl-[protein] + ATP = 3-O-(5'-adenylyl)-L-threonyl-[protein] + diphosphate. The enzyme catalyses L-tyrosyl-[protein] + ATP = O-(5'-adenylyl)-L-tyrosyl-[protein] + diphosphate. The catalysed reaction is L-histidyl-[protein] + UTP = N(tele)-(5'-uridylyl)-L-histidyl-[protein] + diphosphate. It catalyses the reaction L-seryl-[protein] + UTP = O-(5'-uridylyl)-L-seryl-[protein] + diphosphate. It carries out the reaction L-tyrosyl-[protein] + UTP = O-(5'-uridylyl)-L-tyrosyl-[protein] + diphosphate. Nucleotidyltransferase involved in the post-translational modification of proteins. It can catalyze the addition of adenosine monophosphate (AMP) or uridine monophosphate (UMP) to a protein, resulting in modifications known as AMPylation and UMPylation. This is Protein nucleotidyltransferase YdiU from Thiobacillus denitrificans (strain ATCC 25259 / T1).